A 181-amino-acid chain; its full sequence is Probable pyruvoyl-dependent arginine decarboxylase (181 aa).

The residue at position 43 (Ser-43) is a Pyruvic acid (Ser).

It belongs to the PdaD family. The cofactor is pyruvate.

The catalysed reaction is L-arginine + H(+) = agmatine + CO2. In Chlorobium phaeobacteroides (strain BS1), this protein is Probable pyruvoyl-dependent arginine decarboxylase.